Reading from the N-terminus, the 203-residue chain is GTP-binding protein YPTM2 (203 aa).

Residues 15 to 23 (GDSGVGKSC), 33 to 40 (YLDSYIST), 63 to 67 (DTAGQ), 121 to 124 (NKSD), and 151 to 153 (SAK) each bind GTP. Residues 37 to 45 (YISTIGVDF) carry the Effector region motif. S-geranylgeranyl cysteine attachment occurs at residues cysteine 200 and cysteine 201.

This sequence belongs to the small GTPase superfamily. Rab family. In terms of tissue distribution, its expression is weak in stems, higher in roots, leaves and coleoptiles, but highest in flowers.

The protein resides in the cell membrane. In terms of biological role, protein transport. Probably involved in vesicular traffic. This Zea mays (Maize) protein is GTP-binding protein YPTM2 (YPTM2).